Here is a 134-residue protein sequence, read N- to C-terminus: Small ribosomal subunit protein uS11 (134 aa).

The protein belongs to the universal ribosomal protein uS11 family. Part of the 30S ribosomal subunit. Interacts with proteins S7 and S18. Binds to IF-3.

In terms of biological role, located on the platform of the 30S subunit, it bridges several disparate RNA helices of the 16S rRNA. Forms part of the Shine-Dalgarno cleft in the 70S ribosome. This Albidiferax ferrireducens (strain ATCC BAA-621 / DSM 15236 / T118) (Rhodoferax ferrireducens) protein is Small ribosomal subunit protein uS11.